The chain runs to 120 residues: Large ribosomal subunit protein bL20c (120 aa).

The protein belongs to the bacterial ribosomal protein bL20 family.

It localises to the plastid. In terms of biological role, binds directly to 23S ribosomal RNA and is necessary for the in vitro assembly process of the 50S ribosomal subunit. It is not involved in the protein synthesizing functions of that subunit. In Cuscuta gronovii (Common dodder), this protein is Large ribosomal subunit protein bL20c (rpl20).